Consider the following 397-residue polypeptide: ATP-dependent RNA helicase eIF4A (397 aa).

Positions 24 to 52 (DSFDDMNLKSELLRGIYAYGFERPSAIQQ) match the Q motif motif. The 171-residue stretch at 55-225 (IMPVIKGHDV…TKFMRDPVRI (171 aa)) folds into the Helicase ATP-binding domain. 68–75 (AQSGTGKT) contacts ATP. The DEAD box motif lies at 173 to 176 (DEAD). The 162-residue stretch at 236–397 (GIKQFYIAVE…EMPMNVADLI (162 aa)) folds into the Helicase C-terminal domain.

It belongs to the DEAD box helicase family. eIF4A subfamily. In terms of assembly, component of the eIF4F complex, which composition varies with external and internal environmental conditions. It is composed of at least eIF4A, eIF4E and eIF4G.

The protein localises to the cytoplasm. The enzyme catalyses ATP + H2O = ADP + phosphate + H(+). Its function is as follows. ATP-dependent RNA helicase which is a subunit of the eIF4F complex involved in cap recognition and is required for mRNA binding to ribosome. In the current model of translation initiation, eIF4A unwinds RNA secondary structures in the 5'-UTR of mRNAs which is necessary to allow efficient binding of the small ribosomal subunit, and subsequent scanning for the initiator codon. The chain is ATP-dependent RNA helicase eIF4A (TIF1) from Chaetomium globosum (strain ATCC 6205 / CBS 148.51 / DSM 1962 / NBRC 6347 / NRRL 1970) (Soil fungus).